Consider the following 449-residue polypeptide: Xaa-Pro dipeptidase (449 aa).

Mn(2+) is bound by residues Asp246, Asp257, His345, Glu390, and Glu429.

It belongs to the peptidase M24B family. Bacterial-type prolidase subfamily. The cofactor is Mn(2+).

The catalysed reaction is Xaa-L-Pro dipeptide + H2O = an L-alpha-amino acid + L-proline. In terms of biological role, splits dipeptides with a prolyl residue in the C-terminal position. In Yersinia enterocolitica serotype O:8 / biotype 1B (strain NCTC 13174 / 8081), this protein is Xaa-Pro dipeptidase.